Here is a 385-residue protein sequence, read N- to C-terminus: Flap endonuclease 1 (385 aa).

The segment at Met-1–Arg-104 is N-domain. Position 34 (Asp-34) interacts with Mg(2+). DNA contacts are provided by Arg-47 and Arg-70. Asp-86, Glu-158, Glu-160, Asp-179, and Asp-181 together coordinate Mg(2+). Residues Gly-122–Tyr-253 form an I-domain region. Glu-158 contributes to the DNA binding site. DNA-binding residues include Gly-231 and Asp-233. Asp-233 contacts Mg(2+). The interval Thr-336–Phe-344 is interaction with PCNA. Positions Thr-346–Lys-385 are disordered. Positions Ala-368–Lys-385 are enriched in basic residues.

This sequence belongs to the XPG/RAD2 endonuclease family. FEN1 subfamily. As to quaternary structure, interacts with PCNA. Three molecules of FEN1 bind to one PCNA trimer with each molecule binding to one PCNA monomer. PCNA stimulates the nuclease activity without altering cleavage specificity. The cofactor is Mg(2+). In terms of processing, phosphorylated. Phosphorylation upon DNA damage induces relocalization to the nuclear plasma.

It is found in the nucleus. The protein localises to the nucleolus. Its subcellular location is the nucleoplasm. The protein resides in the mitochondrion. Its function is as follows. Structure-specific nuclease with 5'-flap endonuclease and 5'-3' exonuclease activities involved in DNA replication and repair. During DNA replication, cleaves the 5'-overhanging flap structure that is generated by displacement synthesis when DNA polymerase encounters the 5'-end of a downstream Okazaki fragment. It enters the flap from the 5'-end and then tracks to cleave the flap base, leaving a nick for ligation. Also involved in the long patch base excision repair (LP-BER) pathway, by cleaving within the apurinic/apyrimidinic (AP) site-terminated flap. Acts as a genome stabilization factor that prevents flaps from equilibrating into structures that lead to duplications and deletions. Also possesses 5'-3' exonuclease activity on nicked or gapped double-stranded DNA, and exhibits RNase H activity. Also involved in replication and repair of rDNA and in repairing mitochondrial DNA. This is Flap endonuclease 1 from Drosophila melanogaster (Fruit fly).